The sequence spans 317 residues: R2-like ligand binding oxidase (317 aa).

Residues Glu-73, Glu-106, and His-109 each contribute to the Mn(2+) site. The 3-(O4'-tyrosyl)-valine (Val-Tyr) cross-link spans 76-167 (VTQDLQPFMA…ANQVRASVTY (92 aa)). Glu-106 contributes to the Fe cation binding site. Residues Glu-172, Glu-207, and His-210 each coordinate Fe cation.

It belongs to the ribonucleoside diphosphate reductase small chain family. R2-like ligand binding oxidase subfamily. In terms of assembly, homodimer. The cofactor is Fe cation. Mn(2+) is required as a cofactor.

Probable oxidase. This chain is R2-like ligand binding oxidase, found in Saccharopolyspora erythraea (strain ATCC 11635 / DSM 40517 / JCM 4748 / NBRC 13426 / NCIMB 8594 / NRRL 2338).